The sequence spans 338 residues: 3 beta-hydroxysteroid dehydrogenase type 7 (338 aa).

Y159 serves as the catalytic Proton acceptor. K163 serves as a coordination point for NAD(+). The next 2 helical transmembrane spans lie at L258–L278 and P280–F300.

Belongs to the 3-beta-HSD family. In terms of tissue distribution, high levels in liver and lung, moderate levels in spleen, brain, heart, kidney, jejunum and testis. Up-regulated in 3Y1 cells upon growth arrest.

It localises to the endoplasmic reticulum membrane. The enzyme catalyses 7alpha-hydroxycholesterol + NAD(+) = 7alpha-hydroxycholest-4-en-3-one + NADH + H(+). It carries out the reaction 7alpha,25-dihydroxycholesterol + NAD(+) = 7alpha,25-dihydroxy-4-cholesten-3-one + NADH + H(+). It catalyses the reaction (25R)-cholest-5-en-3beta,7alpha,26-triol + NAD(+) = (25R)-7alpha,26-dihydroxycholest-4-en-3-one + NADH + H(+). The catalysed reaction is (24S)-7alpha-dihydroxycholesterol + NAD(+) = (24S)-7alpha,24-dihydroxycholest-4-en-3-one + NADH + H(+). The protein operates within lipid metabolism; steroid biosynthesis. Functionally, the 3-beta-HSD enzymatic system plays a crucial role in the biosynthesis of all classes of hormonal steroids. HSD VII is active against four 7-alpha-hydroxylated sterols. Does not metabolize several different C(19/21) steroids as substrates. Involved in bile acid synthesis. Plays a key role in cell positioning and movement in lymphoid tissues by mediating degradation of 7-alpha,25-dihydroxycholesterol (7-alpha,25-OHC): 7-alpha,25-OHC acts as a ligand for the G protein-coupled receptor GPR183/EBI2, a chemotactic receptor for a number of lymphoid cells. In Rattus norvegicus (Rat), this protein is 3 beta-hydroxysteroid dehydrogenase type 7.